The chain runs to 147 residues: Diaminohydroxyphosphoribosylamino-pyrimidine deaminase (147 aa).

One can recognise a CMP/dCMP-type deaminase domain in the interval 1-123; sequence MNDIFYMKRA…YLKKHGICVK (123 aa). Zn(2+) is bound at residue His50. Residue Glu52 is the Proton donor of the active site. Zn(2+)-binding residues include Cys75 and Cys84.

The protein belongs to the cytidine and deoxycytidylate deaminase family. Zn(2+) serves as cofactor.

The catalysed reaction is 2,5-diamino-6-hydroxy-4-(5-phosphoribosylamino)-pyrimidine + H2O + H(+) = 5-amino-6-(5-phospho-D-ribosylamino)uracil + NH4(+). It participates in cofactor biosynthesis; riboflavin biosynthesis; 5-amino-6-(D-ribitylamino)uracil from GTP: step 2/4. In Buchnera aphidicola subsp. Acyrthosiphon pisum (strain APS) (Acyrthosiphon pisum symbiotic bacterium), this protein is Diaminohydroxyphosphoribosylamino-pyrimidine deaminase (ribD1).